We begin with the raw amino-acid sequence, 617 residues long: Hemagglutinin glycoprotein (617 aa).

The Intravirion portion of the chain corresponds to M1–V37. Residues M1 to C154 are stalk. Residues L38–I58 traverse the membrane as a helical; Signal-anchor for type II membrane protein segment. The Virion surface portion of the chain corresponds to R59–R617. Residues N168, N187, N200, N215, and N238 are each glycosylated (N-linked (GlcNAc...) asparagine; by host). 5 cysteine pairs are disulfide-bonded: C188-C606, C287-C300, C381-C494, C386-C394, and C570-C579. The interaction with host NECTIN4 receptor stretch occupies residues P458–Y543.

Belongs to the paramyxoviruses hemagglutinin-neuraminidase family. Non-sialidase subfamily. In terms of assembly, homodimer; disulfide-linked. Further forms homotetramer (dimer of dimers). Interacts (via C-terminus) with human NECTIN4 (via N-terminus); this interaction allows attachment to the respiratory epithelium and viral entry. Interacts (via C-terminus) with human SLAMF1/CD150 (via N-terminus); this interaction allows attachment and viral entry into the CD150-expressing immune cells. Interacts with human CD46 antigen.

It localises to the virion membrane. Its subcellular location is the host cell membrane. In terms of biological role, attaches the virus to the human SLAMF1/CD150 receptor for entry into host dendritic cells, macrophages, activated memory T cells and naive or memory B cells, thereby explaining the long immunosuppression that follows infection. In the respiratory airways, binds to the NECTIN4 receptor for entry into the host cell. Binding of H protein to the receptor induces a conformational change that allows the F protein to trigger virion/cell membranes fusion. The vaccine and laboratory-adapted strains use host CD46 as an alternate receptor. The high degree of interaction between H and CD46 results in down-regulation of the latter from the surface of infected cells, rendering them more sensitive to c3b-mediated complement lysis. In Homo sapiens (Human), this protein is Hemagglutinin glycoprotein (H).